The sequence spans 353 residues: Heterogeneous nuclear ribonucleoprotein D0 (353 aa).

The disordered stretch occupies residues 1 to 89; sequence MSEEQFGGDG…SSPRHTEAAT (89 aa). Ser-2 is subject to N-acetylserine. Low complexity predominate over residues 11 to 42; that stretch reads AAAAATAAVGGSAGEQEGAMVAAAQGAAAAAG. Gly residues predominate over residues 43–56; the sequence is SGSGGGSAPGGTEG. A compositionally biased stretch (basic and acidic residues) spans 62–71; it reads EGAKIDASKN. Position 69 is a phosphoserine (Ser-69). Residue Lys-70 forms a Glycyl lysine isopeptide (Lys-Gly) (interchain with G-Cter in SUMO2) linkage. Phosphoserine is present on residues Ser-78, Ser-80, and Ser-81. Residue Thr-89 is modified to Phosphothreonine. 2 consecutive RRM domains span residues 95–177 and 180–259; these read WKMF…KTKE and KKIF…MSKE. At Lys-117 the chain carries N6-methyllysine. Position 125 is a phosphothreonine (Thr-125). Lys-127 participates in a covalent cross-link: Glycyl lysine isopeptide (Lys-Gly) (interchain with G-Cter in SUMO2). At Lys-163 the chain carries N6-acetyllysine. Ser-188 carries the post-translational modification Phosphoserine. A Phosphothreonine modification is found at Thr-191. Lys-195 participates in a covalent cross-link: Glycyl lysine isopeptide (Lys-Gly) (interchain with G-Cter in SUMO2). N6-acetyllysine is present on residues Lys-241 and Lys-249. Ser-269 bears the Phosphoserine mark. An omega-N-methylarginine mark is found at Arg-270, Arg-276, Arg-278, and Arg-280. Residue Arg-343 is modified to Asymmetric dimethylarginine; alternate. Arg-343 is subject to Dimethylated arginine; alternate. An Omega-N-methylarginine; alternate modification is found at Arg-343.

As to quaternary structure, identified in a IGF2BP1-dependent mRNP granule complex containing untranslated mRNAs. Part of a complex associated with the FOS mCRD domain and consisting of PABPC1, PAIP1, CSDE1/UNR and SYNCRIP. Interacts with IGF2BP2. Interacts with GTPBP1. Interacts with EIF4G1; the interaction requires RNA. Interacts with EIF3B and RPS3. Post-translationally, methylated by PRMT1, in an insulin-dependent manner. The PRMT1-mediated methylation regulates its phosphorylation. Arg-343 is dimethylated, probably to asymmetric dimethylarginine.

It is found in the nucleus. Its subcellular location is the cytoplasm. Its function is as follows. Binds with high affinity to RNA molecules that contain AU-rich elements (AREs) found within the 3'-UTR of many proto-oncogenes and cytokine mRNAs. Also binds to double- and single-stranded DNA sequences in a specific manner and functions a transcription factor. Each of the RNA-binding domains specifically can bind solely to a single-stranded non-monotonous 5'-UUAG-3' sequence and also weaker to the single-stranded 5'-TTAGGG-3' telomeric DNA repeat. Binds RNA oligonucleotides with 5'-UUAGGG-3' repeats more tightly than the telomeric single-stranded DNA 5'-TTAGGG-3' repeats. Binding of RRM1 to DNA inhibits the formation of DNA quadruplex structure which may play a role in telomere elongation. May be involved in translationally coupled mRNA turnover. Implicated with other RNA-binding proteins in the cytoplasmic deadenylation/translational and decay interplay of the FOS mRNA mediated by the major coding-region determinant of instability (mCRD) domain. May play a role in the regulation of the rhythmic expression of circadian clock core genes. Directly binds to the 3'UTR of CRY1 mRNA and induces CRY1 rhythmic translation. May also be involved in the regulation of PER2 translation. This Rattus norvegicus (Rat) protein is Heterogeneous nuclear ribonucleoprotein D0 (Hnrnpd).